The following is a 65-amino-acid chain: Small ribosomal subunit protein bS21 (65 aa).

Positions 39–65 (EKPSIKRKKKAIAARKRALKKQRKMMD) are disordered. Over residues 43–65 (IKRKKKAIAARKRALKKQRKMMD) the composition is skewed to basic residues.

It belongs to the bacterial ribosomal protein bS21 family.

This Pelobacter propionicus (strain DSM 2379 / NBRC 103807 / OttBd1) protein is Small ribosomal subunit protein bS21.